We begin with the raw amino-acid sequence, 362 residues long: Photosystem II protein D1 3 (362 aa).

3 helical membrane-spanning segments follow: residues 29–46, 118–133, and 142–156; these read YVGW…SATI, HFLI…EWEL, and WICI…AATA. His-118 provides a ligand contact to chlorophyll a. A pheophytin a-binding site is contributed by Tyr-126. Asp-170 and Glu-189 together coordinate [CaMn4O5] cluster. Residues 197–218 traverse the membrane as a helical segment; sequence FHMLGVAGVFGGALISAMHGSL. His-198 serves as a coordination point for chlorophyll a. A quinone contacts are provided by residues His-215 and 264–265; that span reads AF. His-215 contributes to the Fe cation binding site. His-274 is a binding site for Fe cation. Residues 276–290 traverse the membrane as a helical segment; the sequence is IMAAFPVIGIWFTSL. 4 residues coordinate [CaMn4O5] cluster: His-334, Glu-335, Asp-344, and Ala-346. Residues 347 to 362 constitute a propeptide that is removed on maturation; that stretch reads GTESAPVAVSTAKVGG.

Belongs to the reaction center PufL/M/PsbA/D family. PSII is composed of 1 copy each of membrane proteins PsbA, PsbB, PsbC, PsbD, PsbE, PsbF, PsbH, PsbI, PsbJ, PsbK, PsbL, PsbM, PsbT, PsbX, Psb30/Ycf12, peripheral proteins PsbO, CyanoQ (PsbQ), PsbU, PsbV and a large number of cofactors. It forms dimeric complexes. Requires The D1/D2 heterodimer binds P680, chlorophylls that are the primary electron donor of PSII, and subsequent electron acceptors. It shares a non-heme iron and each subunit binds pheophytin, quinone, additional chlorophylls, carotenoids and lipids. D1 provides most of the ligands for the Mn4-Ca-O5 cluster of the oxygen-evolving complex (OEC). There is also a Cl(-1) ion associated with D1 and D2, which is required for oxygen evolution. The PSII complex binds additional chlorophylls, carotenoids and specific lipids. as cofactor. In terms of processing, tyr-161 forms a radical intermediate that is referred to as redox-active TyrZ, YZ or Y-Z. Post-translationally, C-terminally processed by CtpA; processing is essential to allow assembly of the oxygen-evolving complex and thus photosynthetic growth.

The protein resides in the cell inner membrane. The enzyme catalyses 2 a plastoquinone + 4 hnu + 2 H2O = 2 a plastoquinol + O2. Photosystem II (PSII) is a light-driven water:plastoquinone oxidoreductase that uses light energy to abstract electrons from H(2)O, generating O(2) and a proton gradient subsequently used for ATP formation. It consists of a core antenna complex that captures photons, and an electron transfer chain that converts photonic excitation into a charge separation. The D1/D2 (PsbA/PsbD) reaction center heterodimer binds P680, the primary electron donor of PSII as well as several subsequent electron acceptors. This chain is Photosystem II protein D1 3, found in Gloeobacter violaceus (strain ATCC 29082 / PCC 7421).